An 849-amino-acid polypeptide reads, in one-letter code: MAP7 domain-containing protein 1 (849 aa).

2 disordered regions span residues 1-151 and 186-210; these read MESG…REER and EQRL…EKNK. A compositionally biased stretch (pro residues) spans 24–41; that stretch reads EPRPSPEGDPSPPPPPTP. Residues threonine 49 and threonine 53 each carry the phosphothreonine modification. 2 positions are modified to phosphoserine: serine 72 and serine 95. The residue at position 99 (threonine 99) is a Phosphothreonine. Residues serine 115 and serine 118 each carry the phosphoserine modification. Threonine 120 is subject to Phosphothreonine. Residues serine 125 and serine 127 each carry the phosphoserine modification. Residues 132–151 are compositionally biased toward basic and acidic residues; the sequence is QDVKKAGERHKLAKERREER. Positions 167–223 form a coiled coil; the sequence is EKAKALREKQLQERRRRLEEQRLKAEQRRAALEERQRQKLEKNKERYEAAIQRSVKK. Serine 256, serine 275, serine 315, serine 368, and serine 401 each carry phosphoserine. Residues 318-815 form a disordered region; that stretch reads TLPRNGRDQG…GFPAKGTAGD (498 aa). Residues 407-437 show a composition bias toward basic and acidic residues; it reads RRLEATPVQKKEKKDKERENEKEKSALARER. Serine 444, serine 448, serine 454, and serine 460 each carry phosphoserine. Residues 457-474 are compositionally biased toward polar residues; the sequence is AELSTKSKARPTSPSTTW. Lysine 462 is covalently cross-linked (Glycyl lysine isopeptide (Lys-Gly) (interchain with G-Cter in SUMO2)). Serine 479 and serine 496 each carry phosphoserine. The segment covering 479-497 has biased composition (pro residues); that stretch reads SPCPSPGPGHTLPPKPPSP. Positions 523-539 are enriched in basic and acidic residues; that stretch reads PEDKNHSKSRTAEEKEP. The segment covering 542-556 has biased composition (pro residues); that stretch reads PASPAPSPVPSPTPA. Serine 544, serine 548, and serine 552 each carry phosphoserine. Threonine 554 carries the phosphothreonine modification. Residues 568–582 are compositionally biased toward low complexity; that stretch reads PPDTAVPAVPTVPTF. Residues 602–724 are a coiled coil; that stretch reads TTDREEATRL…QERRKRLEEI (123 aa). Over residues 603–743 the composition is skewed to basic and acidic residues; the sequence is TDREEATRLL…AETKKQDGKE (141 aa).

The protein belongs to the MAP7 family.

The protein resides in the cytoplasm. It localises to the cytoskeleton. Its subcellular location is the spindle. The protein localises to the microtubule organizing center. It is found in the centrosome. The protein resides in the midbody. Microtubule-stabilizing protein involved in the control of cell motility and neurite outgrowth. Facilitate microtubule stabilization through the maintenance of acetylated stable microtubules. This is MAP7 domain-containing protein 1 (Map7d1) from Rattus norvegicus (Rat).